A 330-amino-acid polypeptide reads, in one-letter code: DNA-directed RNA polymerase subunit alpha (330 aa).

The tract at residues 1-225 (MSDLAIPTIS…KQFASLVSHS (225 aa)) is alpha N-terminal domain (alpha-NTD). Residues 237–330 (VKYTIPEEKY…KKKNKGIDED (94 aa)) are alpha C-terminal domain (alpha-CTD).

This sequence belongs to the RNA polymerase alpha chain family. Homodimer. The RNAP catalytic core consists of 2 alpha, 1 beta, 1 beta' and 1 omega subunit. When a sigma factor is associated with the core the holoenzyme is formed, which can initiate transcription.

The catalysed reaction is RNA(n) + a ribonucleoside 5'-triphosphate = RNA(n+1) + diphosphate. Its function is as follows. DNA-dependent RNA polymerase catalyzes the transcription of DNA into RNA using the four ribonucleoside triphosphates as substrates. This chain is DNA-directed RNA polymerase subunit alpha, found in Dehalococcoides mccartyi (strain CBDB1).